Reading from the N-terminus, the 637-residue chain is Poly(A) polymerase beta (637 aa).

A compositionally biased stretch (low complexity) spans 1–10; sequence MMPFPVTTQG. The tract at residues 1–23 is disordered; sequence MMPFPVTTQGPPQPAPPPNRYGV. Residues 101-103, Thr110, 114-116, Asp168, Lys229, Tyr238, and 247-248 contribute to the ATP site; these read FGS, DID, and GV. 3 residues coordinate Mg(2+): Asp114, Asp116, and Asp168. The interval 535–555 is disordered; it reads SVPSSTSTMKTGPLISSSQGR.

The protein belongs to the poly(A) polymerase family. In terms of assembly, interacts with GSG1. It depends on Mg(2+) as a cofactor. The cofactor is Mn(2+). Testis specific.

It is found in the nucleus. It carries out the reaction RNA(n) + ATP = RNA(n)-3'-adenine ribonucleotide + diphosphate. The sequence is that of Poly(A) polymerase beta from Homo sapiens (Human).